Consider the following 122-residue polypeptide: Large ribosomal subunit protein uL14 (122 aa).

The protein belongs to the universal ribosomal protein uL14 family. In terms of assembly, part of the 50S ribosomal subunit. Forms a cluster with proteins L3 and L19. In the 70S ribosome, L14 and L19 interact and together make contacts with the 16S rRNA in bridges B5 and B8.

Binds to 23S rRNA. Forms part of two intersubunit bridges in the 70S ribosome. The protein is Large ribosomal subunit protein uL14 of Pelobacter propionicus (strain DSM 2379 / NBRC 103807 / OttBd1).